Consider the following 215-residue polypeptide: UPF0502 protein YceH (215 aa).

Lysine 80 is subject to N6-acetyllysine.

It belongs to the UPF0502 family.

This chain is UPF0502 protein YceH, found in Shigella sonnei (strain Ss046).